Consider the following 1192-residue polypeptide: Coiled-coil domain-containing protein 40 (1192 aa).

Disordered stretches follow at residues 1–78, 126–153, 173–196, 211–246, and 261–289; these read MMDA…PGMD, KAKH…LEVS, SSPE…NVSA, EPIE…YQRD, and GSLT…STPR. Positions 27–45 are enriched in acidic residues; sequence PETEVEFIGETAPDTDVEF. Residues 215-228 are compositionally biased toward pro residues; that stretch reads PTEPPEPAEPPKPA. Acidic residues predominate over residues 267 to 279; sequence DTDDLPLETDEPP. Ser-306 carries the phosphoserine modification. Coiled coils occupy residues 308-369, 425-451, 581-649, 733-768, 830-871, 919-972, and 1044-1118; these read EALL…ATKQ, KTCQ…ALHL, DSEI…MLNK, NTNC…EIAR, LQQE…KIAH, LRTL…EMRS, and QQRE…IVTL.

It belongs to the CCDC40 family. In terms of tissue distribution, specifically expressed in the embryonic node and midline.

The protein resides in the cytoplasm. It is found in the cell projection. Its subcellular location is the cilium. Required for assembly of dynein regulatory complex (DRC) and inner dynein arm (IDA) complexes, which are responsible for ciliary beat regulation, thereby playing a central role in motility in cilia and flagella. Probably acts together with CCDC39 to form a molecular ruler that determines the 96 nanometer (nm) repeat length and arrangements of components in cilia and flagella. Not required for outer dynein arm complexes assembly. Required for axonemal recruitment of CCDC39. The protein is Coiled-coil domain-containing protein 40 of Mus musculus (Mouse).